The chain runs to 251 residues: Imidazole glycerol phosphate synthase subunit HisF (251 aa).

Catalysis depends on residues D11 and D130.

It belongs to the HisA/HisF family. Heterodimer of HisH and HisF.

The protein resides in the cytoplasm. It carries out the reaction 5-[(5-phospho-1-deoxy-D-ribulos-1-ylimino)methylamino]-1-(5-phospho-beta-D-ribosyl)imidazole-4-carboxamide + L-glutamine = D-erythro-1-(imidazol-4-yl)glycerol 3-phosphate + 5-amino-1-(5-phospho-beta-D-ribosyl)imidazole-4-carboxamide + L-glutamate + H(+). Its pathway is amino-acid biosynthesis; L-histidine biosynthesis; L-histidine from 5-phospho-alpha-D-ribose 1-diphosphate: step 5/9. IGPS catalyzes the conversion of PRFAR and glutamine to IGP, AICAR and glutamate. The HisF subunit catalyzes the cyclization activity that produces IGP and AICAR from PRFAR using the ammonia provided by the HisH subunit. The polypeptide is Imidazole glycerol phosphate synthase subunit HisF (Chlorobium phaeobacteroides (strain BS1)).